Here is a 631-residue protein sequence, read N- to C-terminus: Chaperone protein DnaK (631 aa).

Threonine 197 bears the Phosphothreonine; by autocatalysis mark. A disordered region spans residues 599-631 (AQSDAGAAGSASEENTTSNEKVVDADFEDVEKK). Low complexity predominate over residues 603–612 (AGAAGSASEE).

The protein belongs to the heat shock protein 70 family.

Its function is as follows. Acts as a chaperone. This Rickettsia bellii (strain RML369-C) protein is Chaperone protein DnaK.